The following is a 132-amino-acid chain: uncharacterized protein (132 aa).

This is an uncharacterized protein from Botryotinia fuckeliana (Noble rot fungus).